A 343-amino-acid polypeptide reads, in one-letter code: uncharacterized protein (343 aa).

This is an uncharacterized protein from Methanocaldococcus jannaschii (strain ATCC 43067 / DSM 2661 / JAL-1 / JCM 10045 / NBRC 100440) (Methanococcus jannaschii).